Here is a 293-residue protein sequence, read N- to C-terminus: Nucleotide-binding protein cauri_1197 (293 aa).

16 to 23 (GMSGGGLT) is an ATP binding site. Residue 67–70 (DVRS) participates in GTP binding.

Belongs to the RapZ-like family.

Its function is as follows. Displays ATPase and GTPase activities. The protein is Nucleotide-binding protein cauri_1197 of Corynebacterium aurimucosum (strain ATCC 700975 / DSM 44827 / CIP 107346 / CN-1) (Corynebacterium nigricans).